The primary structure comprises 400 residues: Elongation factor Tu (400 aa).

Positions 10-209 (KPHVNVGTIG…AVDSYIPTPE (200 aa)) constitute a tr-type G domain. A G1 region spans residues 19–26 (GHVDHGKT). 19–26 (GHVDHGKT) is a GTP binding site. Threonine 26 contacts Mg(2+). The segment at 60-64 (GITIA) is G2. A G3 region spans residues 81-84 (DCPG). GTP is bound by residues 81–85 (DCPGH) and 136–139 (NKVD). The interval 136 to 139 (NKVD) is G4. A G5 region spans residues 174 to 176 (SAL).

It belongs to the TRAFAC class translation factor GTPase superfamily. Classic translation factor GTPase family. EF-Tu/EF-1A subfamily. As to quaternary structure, monomer.

The protein resides in the cytoplasm. It carries out the reaction GTP + H2O = GDP + phosphate + H(+). Functionally, GTP hydrolase that promotes the GTP-dependent binding of aminoacyl-tRNA to the A-site of ribosomes during protein biosynthesis. In Moorella thermoacetica (strain ATCC 39073 / JCM 9320), this protein is Elongation factor Tu.